A 611-amino-acid chain; its full sequence is UPF0508 protein SCY_3114 (611 aa).

The protein belongs to the UPF0508 family.

This is UPF0508 protein SCY_3114 from Saccharomyces cerevisiae (strain YJM789) (Baker's yeast).